The primary structure comprises 314 residues: 4-hydroxy-3-methylbut-2-enyl diphosphate reductase (314 aa).

Cys-12 is a [4Fe-4S] cluster binding site. His-41 and His-74 together coordinate (2E)-4-hydroxy-3-methylbut-2-enyl diphosphate. 2 residues coordinate dimethylallyl diphosphate: His-41 and His-74. Residues His-41 and His-74 each contribute to the isopentenyl diphosphate site. Cys-96 contacts [4Fe-4S] cluster. His-124 is a (2E)-4-hydroxy-3-methylbut-2-enyl diphosphate binding site. Position 124 (His-124) interacts with dimethylallyl diphosphate. His-124 serves as a coordination point for isopentenyl diphosphate. The active-site Proton donor is the Glu-126. A (2E)-4-hydroxy-3-methylbut-2-enyl diphosphate-binding site is contributed by Thr-168. Cys-198 provides a ligand contact to [4Fe-4S] cluster. (2E)-4-hydroxy-3-methylbut-2-enyl diphosphate is bound by residues Ser-226, Ser-227, Asn-228, and Ser-270. Positions 226, 227, 228, and 270 each coordinate dimethylallyl diphosphate. Isopentenyl diphosphate-binding residues include Ser-226, Ser-227, Asn-228, and Ser-270.

It belongs to the IspH family. [4Fe-4S] cluster serves as cofactor.

It carries out the reaction isopentenyl diphosphate + 2 oxidized [2Fe-2S]-[ferredoxin] + H2O = (2E)-4-hydroxy-3-methylbut-2-enyl diphosphate + 2 reduced [2Fe-2S]-[ferredoxin] + 2 H(+). It catalyses the reaction dimethylallyl diphosphate + 2 oxidized [2Fe-2S]-[ferredoxin] + H2O = (2E)-4-hydroxy-3-methylbut-2-enyl diphosphate + 2 reduced [2Fe-2S]-[ferredoxin] + 2 H(+). It participates in isoprenoid biosynthesis; dimethylallyl diphosphate biosynthesis; dimethylallyl diphosphate from (2E)-4-hydroxy-3-methylbutenyl diphosphate: step 1/1. It functions in the pathway isoprenoid biosynthesis; isopentenyl diphosphate biosynthesis via DXP pathway; isopentenyl diphosphate from 1-deoxy-D-xylulose 5-phosphate: step 6/6. Functionally, catalyzes the conversion of 1-hydroxy-2-methyl-2-(E)-butenyl 4-diphosphate (HMBPP) into a mixture of isopentenyl diphosphate (IPP) and dimethylallyl diphosphate (DMAPP). Acts in the terminal step of the DOXP/MEP pathway for isoprenoid precursor biosynthesis. This is 4-hydroxy-3-methylbut-2-enyl diphosphate reductase from Ectopseudomonas mendocina (strain ymp) (Pseudomonas mendocina).